Reading from the N-terminus, the 634-residue chain is Phospholipase B (634 aa).

Positions 1–19 (MSIITTAFALSLLATTAFA) are cleaved as a signal peptide. Positions 46-569 (DCPSNVTWIR…DTWCWAGDDN (524 aa)) constitute a PLA2c domain. N-linked (GlcNAc...) asparagine glycans are attached at residues asparagine 50, asparagine 56, asparagine 122, asparagine 231, asparagine 246, asparagine 269, asparagine 311, asparagine 340, asparagine 384, asparagine 430, asparagine 478, asparagine 498, asparagine 525, asparagine 550, asparagine 569, asparagine 591, and asparagine 603.

This sequence belongs to the lysophospholipase family. N-glycosylated.

The protein resides in the secreted. It carries out the reaction a 1-acyl-sn-glycero-3-phosphocholine + H2O = sn-glycerol 3-phosphocholine + a fatty acid + H(+). Functionally, exhibits phospholipase B (PLB), lysophospholipase (LPL) and lysophospholipase/transacylase (LPTA) activities. In Cryptococcus neoformans var. neoformans serotype D (strain JEC21 / ATCC MYA-565) (Filobasidiella neoformans), this protein is Phospholipase B (PLB1).